Here is a 282-residue protein sequence, read N- to C-terminus: MPDFPKEHATPMSNRPPAHQARKRFGQNFLRDTGVIDRIVRVIAPRSDQRLIEIGPGQGALTEPLLDAVGALEVIELDRDLIPGLRVQFFNYPDFVIHEGDALQFDFAALAAEGETPGKPLRVIGNLPYNISTPLIFHLLTARGAIADMHFMLQREVVERLAATPGSAAWGRLSVMTQYHCRVDNLFVVPAEAFTPRPKVESAIVRLIPHDEPPHVAHDEALFGDIVREAFGQRRKTLRNNLKTRLDDTAWAALDIDPGRRPQTLSVEELVRIANHVAETAP.

The interval 1–21 (MPDFPKEHATPMSNRPPAHQA) is disordered. Residues N28, L30, G55, E76, D101, and N126 each coordinate S-adenosyl-L-methionine.

The protein belongs to the class I-like SAM-binding methyltransferase superfamily. rRNA adenine N(6)-methyltransferase family. RsmA subfamily.

The protein localises to the cytoplasm. The enzyme catalyses adenosine(1518)/adenosine(1519) in 16S rRNA + 4 S-adenosyl-L-methionine = N(6)-dimethyladenosine(1518)/N(6)-dimethyladenosine(1519) in 16S rRNA + 4 S-adenosyl-L-homocysteine + 4 H(+). Specifically dimethylates two adjacent adenosines (A1518 and A1519) in the loop of a conserved hairpin near the 3'-end of 16S rRNA in the 30S particle. May play a critical role in biogenesis of 30S subunits. The chain is Ribosomal RNA small subunit methyltransferase A from Chromohalobacter salexigens (strain ATCC BAA-138 / DSM 3043 / CIP 106854 / NCIMB 13768 / 1H11).